The sequence spans 198 residues: Leucyl/phenylalanyl-tRNA--protein transferase (198 aa).

The protein belongs to the L/F-transferase family.

The protein localises to the cytoplasm. It carries out the reaction N-terminal L-lysyl-[protein] + L-leucyl-tRNA(Leu) = N-terminal L-leucyl-L-lysyl-[protein] + tRNA(Leu) + H(+). The catalysed reaction is N-terminal L-arginyl-[protein] + L-leucyl-tRNA(Leu) = N-terminal L-leucyl-L-arginyl-[protein] + tRNA(Leu) + H(+). It catalyses the reaction L-phenylalanyl-tRNA(Phe) + an N-terminal L-alpha-aminoacyl-[protein] = an N-terminal L-phenylalanyl-L-alpha-aminoacyl-[protein] + tRNA(Phe). Its function is as follows. Functions in the N-end rule pathway of protein degradation where it conjugates Leu, Phe and, less efficiently, Met from aminoacyl-tRNAs to the N-termini of proteins containing an N-terminal arginine or lysine. This is Leucyl/phenylalanyl-tRNA--protein transferase from Synechocystis sp. (strain ATCC 27184 / PCC 6803 / Kazusa).